The primary structure comprises 438 residues: Protein SPMIP7 (438 aa).

In terms of tissue distribution, testis-specific.

In terms of biological role, essential for normal spermatogenesis. The polypeptide is Protein SPMIP7 (Homo sapiens (Human)).